The chain runs to 394 residues: Flap endonuclease 1 (394 aa).

Positions 1-104 (MGIKQLFSVI…GELAKRFQRK (104 aa)) are N-domain. A Mg(2+)-binding site is contributed by D34. 2 residues coordinate DNA: R47 and R70. Positions 86, 158, 160, 179, and 181 each coordinate Mg(2+). The segment at 122–253 (DVEKFSRRTV…STALKLIREH (132 aa)) is I-domain. E158 is a DNA binding site. Residues G231 and D233 each coordinate DNA. Residue D233 coordinates Mg(2+). The interaction with PCNA stretch occupies residues 341 to 349 (QQARIEGFF). The span at 356–383 (EEEKKAHKRKLEEQAEQKRKKVKEEKKE) shows a compositional bias: basic and acidic residues. Residues 356-394 (EEEKKAHKRKLEEQAEQKRKKVKEEKKEKAKLKAKPRGA) form a disordered region. Residues 384 to 394 (KAKLKAKPRGA) show a composition bias toward basic residues.

Belongs to the XPG/RAD2 endonuclease family. FEN1 subfamily. Interacts with PCNA. Three molecules of dnr-8/fen1 bind to one PCNA trimer with each molecule binding to one PCNA monomer. PCNA stimulates the nuclease activity without altering cleavage specificity. Requires Mg(2+) as cofactor. Phosphorylated. Phosphorylation upon DNA damage induces relocalization to the nuclear plasma.

Its subcellular location is the nucleus. It localises to the nucleolus. The protein resides in the nucleoplasm. The protein localises to the mitochondrion. Structure-specific nuclease with 5'-flap endonuclease and 5'-3' exonuclease activities involved in DNA replication and repair. During DNA replication, cleaves the 5'-overhanging flap structure that is generated by displacement synthesis when DNA polymerase encounters the 5'-end of a downstream Okazaki fragment. It enters the flap from the 5'-end and then tracks to cleave the flap base, leaving a nick for ligation. Also involved in the long patch base excision repair (LP-BER) pathway, by cleaving within the apurinic/apyrimidinic (AP) site-terminated flap. Acts as a genome stabilization factor that prevents flaps from equilibrating into structures that lead to duplications and deletions. Also possesses 5'-3' exonuclease activity on nicked or gapped double-stranded DNA, and exhibits RNase H activity. Also involved in replication and repair of rDNA and in repairing mitochondrial DNA. The protein is Flap endonuclease 1 (dnr-8) of Neurospora crassa (strain ATCC 24698 / 74-OR23-1A / CBS 708.71 / DSM 1257 / FGSC 987).